The primary structure comprises 316 residues: Glutathione synthetase (316 aa).

Residues 125 to 310 (KLFTAWFSDL…ITGMLMDAIE (186 aa)) form the ATP-grasp domain. 151–207 (WEKHSDIILKPLDGMGGASIFRVKEGDPNLGVIAETLTEHGTRYCMAQNYLPAIKDG) contacts ATP. Mg(2+)-binding residues include Glu-281 and Asn-283.

It belongs to the prokaryotic GSH synthase family. Requires Mg(2+) as cofactor. Mn(2+) serves as cofactor.

The catalysed reaction is gamma-L-glutamyl-L-cysteine + glycine + ATP = glutathione + ADP + phosphate + H(+). The protein operates within sulfur metabolism; glutathione biosynthesis; glutathione from L-cysteine and L-glutamate: step 2/2. This chain is Glutathione synthetase, found in Escherichia coli O6:H1 (strain CFT073 / ATCC 700928 / UPEC).